Reading from the N-terminus, the 596-residue chain is Cis-3-hydroxy-L-proline dehydratase (596 aa).

Ser67 serves as the catalytic Proton acceptor.

This sequence belongs to the AcnX family. Monomer. Fe(3+) is required as a cofactor.

It catalyses the reaction cis-3-hydroxy-L-proline = 1-pyrroline-2-carboxylate + H2O. Its activity is regulated as follows. Inhibited by Zn(2+). Not inhibited by pyrrole-2-carboxylate nor its derivative 2-thiophenecarboxylate. Its function is as follows. Catalyzes the dehydration of cis-3-hydroxy-L-proline (c3LHyp) to Delta(1)-pyrroline-2-carboxylate (Pyr2C). No activity with L-proline, trans-4-hydroxy-L-proline (t4LHyp), cis-4-hydroxy-L-proline (c4LHyp), trans-3-hydroxy-L-proline (t3LHyp), D-proline, cis-4-hydroxy-D-proline (c4DHyp), trans-4-hydroxy-D-proline (t4DHyp) or L-serine as substrates. Because of the low catalytic efficiency, C3LHyp is likely not a main physiological substrate of this enzyme in H.jecorina. In Hypocrea jecorina (strain QM6a) (Trichoderma reesei), this protein is Cis-3-hydroxy-L-proline dehydratase.